The following is a 1185-amino-acid chain: DNA-directed RNA polymerase subunit beta' (1185 aa).

4 residues coordinate Zn(2+): Cys60, Cys62, Cys75, and Cys78. Residues Asp449, Asp451, and Asp453 each contribute to the Mg(2+) site. Residues Cys774, Cys853, Cys860, and Cys863 each coordinate Zn(2+).

Belongs to the RNA polymerase beta' chain family. The RNAP catalytic core consists of 2 alpha, 1 beta, 1 beta' and 1 omega subunit. When a sigma factor is associated with the core the holoenzyme is formed, which can initiate transcription. Mg(2+) serves as cofactor. The cofactor is Zn(2+).

It carries out the reaction RNA(n) + a ribonucleoside 5'-triphosphate = RNA(n+1) + diphosphate. In terms of biological role, DNA-dependent RNA polymerase catalyzes the transcription of DNA into RNA using the four ribonucleoside triphosphates as substrates. This chain is DNA-directed RNA polymerase subunit beta', found in Desulforamulus reducens (strain ATCC BAA-1160 / DSM 100696 / MI-1) (Desulfotomaculum reducens).